Here is a 218-residue protein sequence, read N- to C-terminus: Small ribosomal subunit protein uS4 (218 aa).

In terms of domain architecture, S4 RNA-binding spans 111-175; that stretch reads RRLQTQVLRL…SPLKNESHPE (65 aa). A disordered region spans residues 192–218; the sequence is KAAAEAKQAREKPPERGGGRRKRGGRR. Over residues 198 to 209 the composition is skewed to basic and acidic residues; the sequence is KQAREKPPERGG.

The protein belongs to the universal ribosomal protein uS4 family. Part of the 30S ribosomal subunit. Contacts protein S5. The interaction surface between S4 and S5 is involved in control of translational fidelity.

Functionally, one of the primary rRNA binding proteins, it binds directly to 16S rRNA where it nucleates assembly of the body of the 30S subunit. Its function is as follows. With S5 and S12 plays an important role in translational accuracy. This chain is Small ribosomal subunit protein uS4, found in Methanosarcina acetivorans (strain ATCC 35395 / DSM 2834 / JCM 12185 / C2A).